Here is a 100-residue protein sequence, read N- to C-terminus: MMREERLLKVILAPHVSEKSTNTAENNNTVVFKVAVDATKTEIKAAVEKLFEVEVKNVRTVNVKGKTKRTGSRFGKRSDWKKAYVALNEGADIDFSGGAE.

This sequence belongs to the universal ribosomal protein uL23 family. As to quaternary structure, part of the 50S ribosomal subunit. Contacts protein L29, and trigger factor when it is bound to the ribosome.

In terms of biological role, one of the early assembly proteins it binds 23S rRNA. One of the proteins that surrounds the polypeptide exit tunnel on the outside of the ribosome. Forms the main docking site for trigger factor binding to the ribosome. This is Large ribosomal subunit protein uL23 from Idiomarina loihiensis (strain ATCC BAA-735 / DSM 15497 / L2-TR).